Reading from the N-terminus, the 366-residue chain is MKIFDYMEKYDYEQLVMCQDKESGLKAIICIHVTTLGPALGGMRMWTYASEEEAIEDALRLGRGMTYKNAAAGLNLGGGKTVIIGDPRKDKNEAMFRALGRFIQGLNGRYITAEDVGTTVEDMDIIHEETRYVTGVSPAFGSSGNPSPVTAYGVYRGMKAAAKEAFGDDSLEGKVVAVQGVGHVAYELCKHLHNEGAKLIVTDINKENADRAVQEFGAEFVHPDKIYDVECDIFAPCALGAIINDETIERLKCKVVAGSANNQLKEERHGKMLEEKGIVYAPDYVINAGGVINVADELLGYNRERAMKKVEGIYDKILKVFEIAKRDGIPSYLAADRMAEERIEMMRKTRSTFLQDQRNLINFNNK.

K80 is an active-site residue. 180–186 lines the NAD(+) pocket; the sequence is GVGHVAY.

This sequence belongs to the Glu/Leu/Phe/Val dehydrogenases family. As to quaternary structure, homooctamer.

It catalyses the reaction L-leucine + NAD(+) + H2O = 4-methyl-2-oxopentanoate + NH4(+) + NADH + H(+). It functions in the pathway amino-acid degradation; L-leucine degradation; 4-methyl-2-oxopentanoate from L-leucine (dehydrogenase route): step 1/1. Its activity is regulated as follows. Inhibited by pyridoxal phosphate. Functionally, catalyzes the reversible deamination of L-leucine to 4-methyl-2-oxopentanoate. Exhibits the highest activity with L-leucine as substrate, but can also use other L-amino acids such as L-isoleucine, L-valine and L-2-aminovaleric acid. All of the oxo analogs of the amino acid substrates serve as good substrates for the reverse reaction. In Thermoactinomyces intermedius, this protein is Leucine dehydrogenase (ldh).